The following is a 293-amino-acid chain: Ribonuclease HIII (293 aa).

The RNase H type-2 domain occupies 78–293 (LPLIGTDEVG…TEKAKKRLER (216 aa)). 3 residues coordinate a divalent metal cation: Asp-84, Glu-85, and Asp-187.

Belongs to the RNase HII family. RnhC subfamily. Requires Mn(2+) as cofactor. It depends on Mg(2+) as a cofactor.

It localises to the cytoplasm. The catalysed reaction is Endonucleolytic cleavage to 5'-phosphomonoester.. Endonuclease that specifically degrades the RNA of RNA-DNA hybrids. This chain is Ribonuclease HIII, found in Streptococcus pneumoniae (strain JJA).